The sequence spans 162 residues: Peptide methionine sulfoxide reductase MsrA (162 aa).

Cys16 is an active-site residue.

The protein belongs to the MsrA Met sulfoxide reductase family.

The catalysed reaction is L-methionyl-[protein] + [thioredoxin]-disulfide + H2O = L-methionyl-(S)-S-oxide-[protein] + [thioredoxin]-dithiol. The enzyme catalyses [thioredoxin]-disulfide + L-methionine + H2O = L-methionine (S)-S-oxide + [thioredoxin]-dithiol. In terms of biological role, has an important function as a repair enzyme for proteins that have been inactivated by oxidation. Catalyzes the reversible oxidation-reduction of methionine sulfoxide in proteins to methionine. In Geobacter sulfurreducens (strain ATCC 51573 / DSM 12127 / PCA), this protein is Peptide methionine sulfoxide reductase MsrA.